Reading from the N-terminus, the 568-residue chain is Estrogen receptor beta-1 (568 aa).

The modulating stretch occupies residues S12–Y169. 2 consecutive NR C4-type zinc fingers follow at residues C170–C190 and C206–C230. Residues C170 to M235 constitute a DNA-binding region (nuclear receptor). The region spanning S292–H528 is the NR LBD domain.

The protein belongs to the nuclear hormone receptor family. NR3 subfamily. As to quaternary structure, binds DNA as a homodimer. Can form a heterodimer with ER-alpha.

Its subcellular location is the nucleus. Functionally, binds estrogens with an affinity similar to that of ER-alpha, and activates expression of reporter genes containing estrogen response elements (ERE) in an estrogen-dependent manner. This is Estrogen receptor beta-1 (esr2a) from Carassius auratus (Goldfish).